A 313-amino-acid polypeptide reads, in one-letter code: GTPase Era (313 aa).

Residues 20 to 187 (RSGFVALIGA…MDYLAETLPE (168 aa)) enclose the Era-type G domain. The tract at residues 28-35 (GATNAGKS) is G1. 28–35 (GATNAGKS) lines the GTP pocket. The tract at residues 54–58 (QTTRA) is G2. Residues 75-78 (DTPG) form a G3 region. Residues 75–79 (DTPGI) and 137–140 (NKVD) contribute to the GTP site. Positions 137–140 (NKVD) are G4. Residues 166-168 (ISA) are G5. The KH type-2 domain occupies 218–295 (LHQELPYASH…HLFLFVKVRE (78 aa)).

The protein belongs to the TRAFAC class TrmE-Era-EngA-EngB-Septin-like GTPase superfamily. Era GTPase family. As to quaternary structure, monomer.

The protein resides in the cytoplasm. Its subcellular location is the cell inner membrane. Functionally, an essential GTPase that binds both GDP and GTP, with rapid nucleotide exchange. Plays a role in 16S rRNA processing and 30S ribosomal subunit biogenesis and possibly also in cell cycle regulation and energy metabolism. This chain is GTPase Era, found in Rhizobium meliloti (strain 1021) (Ensifer meliloti).